Consider the following 169-residue polypeptide: Cyclic pyranopterin monophosphate synthase (169 aa).

Substrate-binding positions include 83 to 85 and 121 to 122; these read LCH and ME. Asp136 is an active-site residue.

The protein belongs to the MoaC family. Homohexamer; trimer of dimers.

The enzyme catalyses (8S)-3',8-cyclo-7,8-dihydroguanosine 5'-triphosphate = cyclic pyranopterin phosphate + diphosphate. It functions in the pathway cofactor biosynthesis; molybdopterin biosynthesis. In terms of biological role, catalyzes the conversion of (8S)-3',8-cyclo-7,8-dihydroguanosine 5'-triphosphate to cyclic pyranopterin monophosphate (cPMP). The polypeptide is Cyclic pyranopterin monophosphate synthase (Rhodospirillum centenum (strain ATCC 51521 / SW)).